The chain runs to 852 residues: Phenylalanine--tRNA ligase beta subunit (852 aa).

The region spanning 44–159 is the tRNA-binding domain; the sequence is PETTGPLVIG…DADLASANLK (116 aa). One can recognise a B5 domain in the interval 428–510; sequence PEMPMITIHT…RLEGLEDIPS (83 aa). Mg(2+) is bound by residues D488, D494, E497, and E498. Residues 758–851 enclose the FDX-ACB domain; it reads SAFPAVLQDI…ATEKVGAQLR (94 aa).

This sequence belongs to the phenylalanyl-tRNA synthetase beta subunit family. Type 1 subfamily. As to quaternary structure, tetramer of two alpha and two beta subunits. Mg(2+) is required as a cofactor.

It is found in the cytoplasm. The enzyme catalyses tRNA(Phe) + L-phenylalanine + ATP = L-phenylalanyl-tRNA(Phe) + AMP + diphosphate + H(+). The polypeptide is Phenylalanine--tRNA ligase beta subunit (Corynebacterium jeikeium (strain K411)).